We begin with the raw amino-acid sequence, 373 residues long: MSGSSRRGERLRVAVVFGGRSNEHAISCVSAGSILRNLDPRRFEVIAIGITPQGSWVLTDGNPDALAITDRRLPEVSSQSGTELALPADPRWGGQLVSLPPGAGEVLASVDVVFPVLHGPYGEDGTIQGLLELAGVPYVGAGVLASAAGMDKEFTKKLWSAAGLPIGPHAVLRPSRQSLDREELQRLGLPAYVKPARGGSSIGVSRVSSFDELPAAIAAARRHDPKVIVEAAINGRELECGVLEFPDGRLEASTLGEIRVAGVRGREDGFYDFETKYLDDAAELDVPAKVEDDVADAVRQLAIRAFEAIDCQGLARVDFFLTDDGPVINELNTMPGFTTISMYPRMWVASGVDYPTLLATMVETALSRGIGLR.

An ATP-grasp domain is found at 156–363 (KKLWSAAGLP…YPTLLATMVE (208 aa)). Residue 184–239 (LQRLGLPAYVKPARGGSSIGVSRVSSFDELPAAIAAARRHDPKVIVEAAINGRELE) coordinates ATP. The Mg(2+) site is built by Asp-318, Glu-330, and Asn-332.

It belongs to the D-alanine--D-alanine ligase family. Mg(2+) serves as cofactor. Requires Mn(2+) as cofactor.

It is found in the cytoplasm. The enzyme catalyses 2 D-alanine + ATP = D-alanyl-D-alanine + ADP + phosphate + H(+). Its pathway is cell wall biogenesis; peptidoglycan biosynthesis. Cell wall formation. This Mycobacterium ulcerans (strain Agy99) protein is D-alanine--D-alanine ligase.